Here is a 1114-residue protein sequence, read N- to C-terminus: Putative surface protein SAV2496/SAV2497 (1114 aa).

The first 50 residues, Met1–Ala50, serve as a signal peptide directing secretion. 3 disordered regions span residues Thr76–Pro116, Lys440–Thr473, and Glu496–Glu1088. Composition is skewed to basic and acidic residues over residues Asp96 to Pro116, Lys451 to Lys461, Gly505 to Pro523, Ser554 to Asn570, and Lys579 to Lys589. The G5 1 domain occupies Ser419–Thr501. One can recognise a G5 2 domain in the interval Tyr547 to Thr628. Residues Thr590–Ile604 show a composition bias toward low complexity. Composition is skewed to basic and acidic residues over residues Ser605–Ile618, Gly632–Pro650, Ser681–Asn697, Lys706–Lys716, Ser733–Ile746, Gly760–Pro778, Ser809–Asn825, Lys834–Lys844, Ser861–Val874, Lys918–Lys929, and Phe946–Gln965. A G5 3 domain is found at Tyr674–Thr756. A G5 4 domain is found at Tyr802–Lys884. A G5 5 domain is found at His930–Lys1012. Over residues Gln968–Pro982 the composition is skewed to polar residues. The span at Glu996–Ser1026 shows a compositional bias: basic and acidic residues. The LPXTG sorting signal motif lies at Leu1082 to Gly1086. Thr1085 carries the pentaglycyl murein peptidoglycan amidated threonine modification. The propeptide at Gly1086–Asn1114 is removed by sortase.

It is found in the secreted. Its subcellular location is the cell wall. This chain is Putative surface protein SAV2496/SAV2497, found in Staphylococcus aureus (strain Mu50 / ATCC 700699).